Consider the following 354-residue polypeptide: Uroporphyrinogen decarboxylase (354 aa).

Residues 27–31 (RQAGR), phenylalanine 46, aspartate 77, tyrosine 154, serine 209, and histidine 327 contribute to the substrate site.

Belongs to the uroporphyrinogen decarboxylase family. In terms of assembly, homodimer.

Its subcellular location is the cytoplasm. It catalyses the reaction uroporphyrinogen III + 4 H(+) = coproporphyrinogen III + 4 CO2. It functions in the pathway porphyrin-containing compound metabolism; protoporphyrin-IX biosynthesis; coproporphyrinogen-III from 5-aminolevulinate: step 4/4. In terms of biological role, catalyzes the decarboxylation of four acetate groups of uroporphyrinogen-III to yield coproporphyrinogen-III. This chain is Uroporphyrinogen decarboxylase, found in Shewanella oneidensis (strain ATCC 700550 / JCM 31522 / CIP 106686 / LMG 19005 / NCIMB 14063 / MR-1).